The following is a 126-amino-acid chain: Large ribosomal subunit protein bL21 (126 aa).

The interval 105 to 126 is disordered; sequence KKPSVGPRAKRTKAAPAAEAAE.

As to quaternary structure, contacts protein L20. Part of the 50S ribosomal subunit.

In terms of biological role, this protein binds to 23S rRNA in the presence of protein L20. This chain is Large ribosomal subunit protein bL21, found in Rhodopseudomonas palustris (strain ATCC BAA-98 / CGA009).